Here is a 209-residue protein sequence, read N- to C-terminus: Protein Nef (209 aa).

Gly-2 carries N-myristoyl glycine; by host lipidation. The residue at position 6 (Ser-6) is a Phosphoserine; by host. Disordered stretches follow at residues 16-35 (IRER…AVSQ) and 43-71 (DKCG…EVGF). Residues 47-61 (AAASSSPAANNASCE) are compositionally biased toward low complexity. The segment at 65 to 68 (EEEE) is acidic; interacts with host PACS1 and PACS2; stabilizes the interaction of NEF/MHC-I with host AP1M1; necessary for MHC-I internalization. Residues 72–81 (PVRPQVPLRP) form an SH3-binding; interaction with Src family tyrosine kinases region. The short motif at 75-78 (PQVP) is the PxxP; stabilizes the interaction of NEF/MHC-I with host AP1M1; necessary for MHC-I internalization element. The tract at residues 111–127 (EILDLWVYHTQGYFPDW) is mediates dimerization, Nef-PTE1 interaction. Residues 151–183 (MSPEEVEEANEGENNCLLHPISQHGMEDAEREV) form a binding to ATP6V1H region. Residues 167–168 (LL) carry the Dileucine internalization motif; necessary for CD4 internalization motif. The short motif at 177–178 (ED) is the Diacidic; necessary for CD4 internalization element.

It belongs to the lentivirus primate group Nef protein family. As to quaternary structure, monomer; cytosolic form. Homodimer; membrane bound form. Interacts with Nef associated p21-activated kinase (PAK2); this interaction activates PAK2. Associates with the Nef-MHC-I-AP1 complex; this complex is required for MHC-I internalization. Interacts (via C-terminus) with host PI3-kinase. Interacts with host PACS1; this interaction seems to be weak. Interacts with host PACS2. Interacts with host LCK and MAPK3; these interactions inhibit the kinase activity of the latter. Interacts with host ATP6V1H; this interaction may play a role in CD4 endocytosis. Associates with the CD4-Nef-AP2 complex; this complex is required for CD4 internalization. Interacts with host AP2 subunit alpha and AP2 subunit sigma2. Interacts with TCR-zeta chain; this interaction up-regulates the Fas ligand (FasL) surface expression. Interacts with host HCK, LYN, and SRC; these interactions activate the Src family kinases. Interacts with MAP3K5; this interaction inhibits the Fas and TNFR-mediated death signals. Interacts with beta-COP and PTE1. Interacts with human RACK1; this increases Nef phosphorylation by PKC. Interacts with TP53; this interaction decreases the half-life of TP53, protecting the infected cell against p53-mediated apoptosis. In terms of processing, the virion-associated Nef proteins are cleaved by the viral protease to release the soluble C-terminal core protein. Nef is probably cleaved concomitantly with viral structural proteins on maturation of virus particles. Myristoylated. Post-translationally, phosphorylated on serine residues, probably by host PKCdelta and theta.

The protein localises to the host cell membrane. It is found in the virion. It localises to the secreted. The protein resides in the host Golgi apparatus membrane. Functionally, factor of infectivity and pathogenicity, required for optimal virus replication. Alters numerous pathways of T-lymphocyte function and down-regulates immunity surface molecules in order to evade host defense and increase viral infectivity. Alters the functionality of other immunity cells, like dendritic cells, monocytes/macrophages and NK cells. In terms of biological role, in infected CD4(+) T-lymphocytes, down-regulates the surface MHC-I, mature MHC-II, CD4, CD28, CCR5 and CXCR4 molecules. Mediates internalization and degradation of host CD4 through the interaction of with the cytoplasmic tail of CD4, the recruitment of AP-2 (clathrin adapter protein complex 2), internalization through clathrin coated pits, and subsequent transport to endosomes and lysosomes for degradation. Diverts host MHC-I molecules to the trans-Golgi network-associated endosomal compartments by an endocytic pathway to finally target them for degradation. MHC-I down-regulation may involve AP-1 (clathrin adapter protein complex 1) or possibly Src family kinase-ZAP70/Syk-PI3K cascade recruited by PACS2. In consequence infected cells are masked for immune recognition by cytotoxic T-lymphocytes. Decreasing the number of immune receptors also prevents reinfection by more HIV particles (superinfection). Down-regulates host SERINC3 and SERINC5 thereby excluding these proteins from the viral particles. Virion infectivity is drastically higher when SERINC3 or SERINC5 are excluded from the viral envelope, because these host antiviral proteins impair the membrane fusion event necessary for subsequent virion penetration. Bypasses host T-cell signaling by inducing a transcriptional program nearly identical to that of anti-CD3 cell activation. Interaction with TCR-zeta chain up-regulates the Fas ligand (FasL). Increasing surface FasL molecules and decreasing surface MHC-I molecules on infected CD4(+) cells send attacking cytotoxic CD8+ T-lymphocytes into apoptosis. Its function is as follows. Plays a role in optimizing the host cell environment for viral replication without causing cell death by apoptosis. Protects the infected cells from apoptosis in order to keep them alive until the next virus generation is ready to strike. Inhibits the Fas and TNFR-mediated death signals by blocking MAP3K5/ASK1. Decreases the half-life of TP53, protecting the infected cell against p53-mediated apoptosis. Inhibits the apoptotic signals regulated by the Bcl-2 family proteins through the formation of a Nef/PI3-kinase/PAK2 complex that leads to activation of PAK2 and induces phosphorylation of host BAD. Functionally, extracellular Nef protein targets CD4(+) T-lymphocytes for apoptosis by interacting with CXCR4 surface receptors. The sequence is that of Protein Nef from Human immunodeficiency virus type 1 group M subtype A (isolate MAL) (HIV-1).